Here is a 458-residue protein sequence, read N- to C-terminus: Photosystem II CP43 reaction center protein (458 aa).

The next 5 membrane-spanning stretches (helical) occupy residues 54-78, 119-140, 163-185, 240-260, and 276-297; these read LFEVAHFTPEKPLYEQGDILLPHLA, LRGPETLEQYSDFFSQDWKDKN, KAMFFGGLYDPWVPGGGGVRVIT, RPFNWARRSLVWSGEAYLSYS, and WFNNTVYPSEFYGPTGSEASQA. Glutamate 352 is a [CaMn4O5] cluster binding site. Residues 432–456 traverse the membrane as a helical segment; it reads RARAAAAGFEKGIDRKTEPVLSMSD.

It belongs to the PsbB/PsbC family. PsbC subfamily. PSII is composed of 1 copy each of membrane proteins PsbA, PsbB, PsbC, PsbD, PsbE, PsbF, PsbH, PsbI, PsbJ, PsbK, PsbL, PsbM, PsbT, PsbX, PsbY, PsbZ, Psb30/Ycf12, peripheral proteins PsbO, CyanoQ (PsbQ), PsbU, PsbV and a large number of cofactors. It forms dimeric complexes. Binds multiple chlorophylls and provides some of the ligands for the Ca-4Mn-5O cluster of the oxygen-evolving complex. It may also provide a ligand for a Cl- that is required for oxygen evolution. PSII binds additional chlorophylls, carotenoids and specific lipids. is required as a cofactor.

It is found in the cellular thylakoid membrane. In terms of biological role, one of the components of the core complex of photosystem II (PSII). It binds chlorophyll and helps catalyze the primary light-induced photochemical processes of PSII. PSII is a light-driven water:plastoquinone oxidoreductase, using light energy to abstract electrons from H(2)O, generating O(2) and a proton gradient subsequently used for ATP formation. This Prochlorothrix hollandica protein is Photosystem II CP43 reaction center protein.